The chain runs to 252 residues: Imidazole glycerol phosphate synthase subunit HisF (252 aa).

Residues D11 and D130 contribute to the active site.

This sequence belongs to the HisA/HisF family. Heterodimer of HisH and HisF.

The protein resides in the cytoplasm. The catalysed reaction is 5-[(5-phospho-1-deoxy-D-ribulos-1-ylimino)methylamino]-1-(5-phospho-beta-D-ribosyl)imidazole-4-carboxamide + L-glutamine = D-erythro-1-(imidazol-4-yl)glycerol 3-phosphate + 5-amino-1-(5-phospho-beta-D-ribosyl)imidazole-4-carboxamide + L-glutamate + H(+). It functions in the pathway amino-acid biosynthesis; L-histidine biosynthesis; L-histidine from 5-phospho-alpha-D-ribose 1-diphosphate: step 5/9. In terms of biological role, IGPS catalyzes the conversion of PRFAR and glutamine to IGP, AICAR and glutamate. The HisF subunit catalyzes the cyclization activity that produces IGP and AICAR from PRFAR using the ammonia provided by the HisH subunit. The protein is Imidazole glycerol phosphate synthase subunit HisF of Thermococcus onnurineus (strain NA1).